Here is a 193-residue protein sequence, read N- to C-terminus: Lipopolysaccharide core heptose(II)-phosphate phosphatase (193 aa).

The signal sequence occupies residues 1 to 25 (MKLKKHVAVLLISFLCLIGLVTQHA).

It belongs to the phosphoglycerate mutase family. Ais subfamily.

The protein resides in the periplasm. The protein operates within bacterial outer membrane biogenesis; lipopolysaccharide metabolism. Functionally, catalyzes the dephosphorylation of heptose(II) of the outer membrane lipopolysaccharide core. The polypeptide is Lipopolysaccharide core heptose(II)-phosphate phosphatase (Escherichia fergusonii (strain ATCC 35469 / DSM 13698 / CCUG 18766 / IAM 14443 / JCM 21226 / LMG 7866 / NBRC 102419 / NCTC 12128 / CDC 0568-73)).